The following is a 588-amino-acid chain: Adenine deaminase (588 aa).

It belongs to the metallo-dependent hydrolases superfamily. Adenine deaminase family. Homodimer. Mn(2+) is required as a cofactor.

The catalysed reaction is adenine + H2O + H(+) = hypoxanthine + NH4(+). This is Adenine deaminase from Escherichia coli (strain SE11).